We begin with the raw amino-acid sequence, 558 residues long: Potassium-transporting ATPase potassium-binding subunit (558 aa).

11 helical membrane-spanning segments follow: residues 1-21 (MDTLAGILQVASVVLVLVLVH), 58-78 (WPAYLRAVLAFSLVGVLVVYG), 85-105 (FLPYALGLPAVPEGISFNTAV), 130-150 (GLAVQNFVSAAVGIAVAIALV), 179-199 (LSLVTAVVLIAGGVIQNFAGF), 245-265 (PTAWTSAFQVLLMLVIPFSLP), 279-299 (TAIAAVMATIAVASLTALTLF), 374-394 (GLYGMLVLAVIAVFVAGLLVG), 416-436 (ILVTPILVLVGTALSFAIPAV), 484-504 (ALGVAMLLGRFVPIVLVLALA), and 527-547 (FVGLLIGVTVIVTALTYFPVL).

It belongs to the KdpA family. In terms of assembly, the system is composed of three essential subunits: KdpA, KdpB and KdpC.

The protein resides in the cell membrane. Its function is as follows. Part of the high-affinity ATP-driven potassium transport (or Kdp) system, which catalyzes the hydrolysis of ATP coupled with the electrogenic transport of potassium into the cytoplasm. This subunit binds the extracellular potassium ions and delivers the ions to the membrane domain of KdpB through an intramembrane tunnel. The polypeptide is Potassium-transporting ATPase potassium-binding subunit (Clavibacter sepedonicus (Clavibacter michiganensis subsp. sepedonicus)).